We begin with the raw amino-acid sequence, 392 residues long: Speckle-type POZ protein-like A (392 aa).

An MATH domain is found at 31–161; the sequence is KFSYMWTINN…DDKLTLFCEV (131 aa). The 68-residue stretch at 200-267 folds into the BTB domain; the sequence is TDCSLYVGGQ…IYTGKAPNLE (68 aa).

Belongs to the Tdpoz family. As to quaternary structure, homodimer. Heterodimer with SPOP. Component of cullin-RING-based BCR (BTB-CUL3-RBX1) E3 ubiquitin-protein ligase complexes containing homodimeric SPOPL or the heterodimer formed by SPOP and SPOPL.

The protein localises to the nucleus. The protein operates within protein modification; protein ubiquitination. Functionally, component of a cullin-RING-based BCR (BTB-CUL3-RBX1) E3 ubiquitin-protein ligase complex that mediates the ubiquitination and subsequent proteasomal degradation of target proteins, but with relatively low efficiency. This chain is Speckle-type POZ protein-like A (spopla), found in Danio rerio (Zebrafish).